Reading from the N-terminus, the 621-residue chain is MEFTIAEELAKNQKSISVAEFFEKNRQILGFDSAPRSLITTVKEAVDNALDACEEAGILPDILVQIERTGQDYVTVIIEDNGPGIIKEQIPKVFAKLLYGSRFHALKQSRGQQGIGISAAVLYAQMTAGKQTKILSKTGSGNPAHYYELMINTSTNEPDILKDEIRDWFRPHGTQIELEMKAAYVKGRRQSISEYLKATAIVNPHARITLIEPDGNEEVFERATDKMPKPAEEILPHPEGIELGTLMKMLHYTERQKLAPFLRYSFCKIGLLTAEEICKASGLDPEIDPHALGRHEARKLIEAFEKVKIMSPPTDCLSPIGEELIYRGLEKETNVDFIATSTRKPAVYSGNPFVVEVGLAYGGKLPKEEKISIMRFANRVPLLYQQGGCVTTHAVEDIKWKQYGLNQPGGGVPVGPAILLIHVASINVPFTSESKDAIADIPVIKDEIDLAIKDVARKLKHYLSKQSNLKKRREKEIIITKVLPKMAVKVANILEKDVPDINPVVAKIMGNLLVHRKVKRNEDGTADVVIKVKNFGTSAYAFKVHEMLPCTILGAKPEPKVVTLGNDYDYVWDISAAAGSSKVLSYRIESTTDKELGTFPDLVVEGLEEELVTGAKAFKGV.

Residues N48, D80, 101 to 102 (SR), 111 to 118 (GQQGIGIS), and K435 contribute to the ATP site.

The protein belongs to the TOP6B family. In terms of assembly, homodimer. Heterotetramer of two Top6A and two Top6B chains.

It carries out the reaction ATP-dependent breakage, passage and rejoining of double-stranded DNA.. Functionally, relaxes both positive and negative superturns and exhibits a strong decatenase activity. The polypeptide is Type 2 DNA topoisomerase 6 subunit B (Methanosarcina barkeri (strain Fusaro / DSM 804)).